The chain runs to 736 residues: Polyribonucleotide nucleotidyltransferase (736 aa).

Residues D506 and D512 each coordinate Mg(2+). One can recognise a KH domain in the interval 573–632 (PRLTTIQVPVDAIGLIIGKGGETIRSITEETGAEINIEDDGTVTIACSSVEGTHAALATI). The S1 motif domain occupies 642 to 717 (GTIYLGKVRD…GKTRFALSMR (76 aa)).

It belongs to the polyribonucleotide nucleotidyltransferase family. The cofactor is Mg(2+).

It is found in the cytoplasm. The enzyme catalyses RNA(n+1) + phosphate = RNA(n) + a ribonucleoside 5'-diphosphate. Its function is as follows. Involved in mRNA degradation. Catalyzes the phosphorolysis of single-stranded polyribonucleotides processively in the 3'- to 5'-direction. The polypeptide is Polyribonucleotide nucleotidyltransferase (Chlorobium limicola (strain DSM 245 / NBRC 103803 / 6330)).